Reading from the N-terminus, the 102-residue chain is UPF0751 protein DSY4013 (102 aa).

It belongs to the UPF0751 family.

The protein is UPF0751 protein DSY4013 of Desulfitobacterium hafniense (strain Y51).